The sequence spans 271 residues: Serine protease SP24D (271 aa).

The first 22 residues, 1–22 (MTLADRVPLALAALAYLALVSG), serve as a signal peptide directing secretion. The propeptide at 23–49 (VRFHLSEQNDVLPGGSQARRPFFQGAR) is activation peptide. In terms of domain architecture, Peptidase S1 spans 50–269 (IVGGSVASEG…FVTWIQTTMR (220 aa)). A disulfide bridge links cysteine 75 with cysteine 91. Active-site charge relay system residues include histidine 90 and aspartate 136. Disulfide bonds link cysteine 199/cysteine 211 and cysteine 221/cysteine 246. Catalysis depends on serine 225, which acts as the Charge relay system.

It belongs to the peptidase S1 family. In terms of tissue distribution, highest level of adult expression is in the thorax.

The sequence is that of Serine protease SP24D (Sp24D) from Anopheles gambiae (African malaria mosquito).